A 124-amino-acid polypeptide reads, in one-letter code: Large ribosomal subunit protein bL12c (124 aa).

Belongs to the bacterial ribosomal protein bL12 family. Homodimer. Part of the ribosomal stalk of the 50S ribosomal subunit. Forms a multimeric L10(L12)X complex, where L10 forms an elongated spine to which 2 to 4 L12 dimers bind in a sequential fashion. Binds GTP-bound translation factors.

It is found in the plastid. The protein localises to the chloroplast. Functionally, forms part of the ribosomal stalk which helps the ribosome interact with GTP-bound translation factors. Is thus essential for accurate translation. The protein is Large ribosomal subunit protein bL12c of Cyanidioschyzon merolae (strain NIES-3377 / 10D) (Unicellular red alga).